Here is a 293-residue protein sequence, read N- to C-terminus: Urease accessory protein UreD 2 (293 aa).

The protein belongs to the UreD family. UreD, UreF and UreG form a complex that acts as a GTP-hydrolysis-dependent molecular chaperone, activating the urease apoprotein by helping to assemble the nickel containing metallocenter of UreC. The UreE protein probably delivers the nickel.

The protein localises to the cytoplasm. Functionally, required for maturation of urease via the functional incorporation of the urease nickel metallocenter. This chain is Urease accessory protein UreD 2, found in Streptomyces griseus subsp. griseus (strain JCM 4626 / CBS 651.72 / NBRC 13350 / KCC S-0626 / ISP 5235).